The primary structure comprises 459 residues: Glutamate--tRNA ligase 1 (459 aa).

The short motif at 8 to 18 (PSPTGYIHIGN) is the 'HIGH' region element. The short motif at 249–253 (GLSKR) is the 'KMSKS' region element. An ATP-binding site is contributed by K252.

It belongs to the class-I aminoacyl-tRNA synthetase family. Glutamate--tRNA ligase type 1 subfamily. In terms of assembly, monomer.

The protein resides in the cytoplasm. It catalyses the reaction tRNA(Glu) + L-glutamate + ATP = L-glutamyl-tRNA(Glu) + AMP + diphosphate. Catalyzes the attachment of glutamate to tRNA(Glu) in a two-step reaction: glutamate is first activated by ATP to form Glu-AMP and then transferred to the acceptor end of tRNA(Glu). This chain is Glutamate--tRNA ligase 1, found in Bartonella quintana (strain Toulouse) (Rochalimaea quintana).